Reading from the N-terminus, the 270-residue chain is Large ribosomal subunit protein bL21m (270 aa).

The transit peptide at 1 to 68 (MASLRCFREL…HWYRSQDRCF (68 aa)) directs the protein to the mitochondrion. The disordered stretch occupies residues 68 to 113 (FSSNTKDTDEDEESSEGEDDDEEEGEDFEDSADMEVEREYSPAEKV). Over residues 75-101 (TDEDEESSEGEDDDEEEGEDFEDSADM) the composition is skewed to acidic residues. The span at 102–113 (EVEREYSPAEKV) shows a compositional bias: basic and acidic residues.

This sequence belongs to the bacterial ribosomal protein bL21 family. In terms of assembly, component of the mitochondrial ribosome large subunit. Constitutively expressed in roots, stems, leaves, flowers, pistils and siliques.

Its subcellular location is the mitochondrion. This protein binds to 23S ribosomal RNA in the presence of protein L20. Required for karyogamy during female gametophyte development, when the two polar nuclei fuse to form the diploid central cell nucleus, and during double fertilization of the egg cell and the central cell. The protein is Large ribosomal subunit protein bL21m of Arabidopsis thaliana (Mouse-ear cress).